Consider the following 293-residue polypeptide: MKNFKGTFTALVTPFKNGKIDFASLDKLLKQQLAGGVDGFVVNGTTGESPVLTSSEKAELFKHIRNVCGDKVVLIMGTGSNNTAQTIEDSRKAEEMGADAILVVVPYYNKPPQRGLYEHFKAVASSVKIPTILYNVPGRTITSLETGTIRDLAKVKGVVGIKEATGKIDLASEIIKACGSEFVMLSGDDGTYVEFLGVGGHGVISVASHVIPAQMVQWKKWVSEGALDKARADIAKYNDLINLLFVEANPIPVKKALQLMGILESAELRLPLVELGAENTAKLQAEMKKVGVL.

Thr-46 serves as a coordination point for pyruvate. Tyr-134 (proton donor/acceptor) is an active-site residue. The active-site Schiff-base intermediate with substrate is Lys-162. A pyruvate-binding site is contributed by Ile-204.

This sequence belongs to the DapA family. Homotetramer; dimer of dimers.

It localises to the cytoplasm. The catalysed reaction is L-aspartate 4-semialdehyde + pyruvate = (2S,4S)-4-hydroxy-2,3,4,5-tetrahydrodipicolinate + H2O + H(+). The protein operates within amino-acid biosynthesis; L-lysine biosynthesis via DAP pathway; (S)-tetrahydrodipicolinate from L-aspartate: step 3/4. Functionally, catalyzes the condensation of (S)-aspartate-beta-semialdehyde [(S)-ASA] and pyruvate to 4-hydroxy-tetrahydrodipicolinate (HTPA). The protein is 4-hydroxy-tetrahydrodipicolinate synthase of Bdellovibrio bacteriovorus (strain ATCC 15356 / DSM 50701 / NCIMB 9529 / HD100).